A 201-amino-acid chain; its full sequence is Phospholipase A2 inhibitor PIP (201 aa).

Residues methionine 1 to serine 19 form the signal peptide. 8 cysteine pairs are disulfide-bonded: cysteine 22–cysteine 46, cysteine 25–cysteine 32, cysteine 39–cysteine 67, cysteine 73–cysteine 94, cysteine 95–cysteine 100, cysteine 118–cysteine 143, cysteine 136–cysteine 165, and cysteine 169–cysteine 191. A glycan (N-linked (GlcNAc...) asparagine) is linked at asparagine 157.

Homohexamer. Post-translationally, glycosylated. Expressed by the liver.

The protein resides in the secreted. In terms of biological role, inhibits the enzymatic activity of phospholipase A2 (PA2). Binds to the major PLA2 toxin of D.russelli siamensis (Daboiatoxin, AC Q7T2R1, and AC Q7T3T5) at 1-2-fold molar excess of inhibitor to toxin. It exhibits broad spectra in neutralizing the toxicity of various snake venoms and toxins and inhibits the formation of edema in mice. May bind to PLA2 through its proline-rich hydrophobic core region. This Malayopython reticulatus (Reticulate python) protein is Phospholipase A2 inhibitor PIP.